A 786-amino-acid chain; its full sequence is Toll-like receptor 1 (786 aa).

An N-terminal signal peptide occupies residues 1–24 (MTSIFHFAIIFMLILQIRIQLSEE). Topologically, residues 25-580 (SEFLVDRSKN…HMSELSCNIT (556 aa)) are extracellular. Residue Asn51 is glycosylated (N-linked (GlcNAc...) asparagine). LRR repeat units follow at residues 54 to 77 (QNYI…LIIS), 78 to 101 (HNRI…LDLS), 102 to 125 (HNKL…SFNA), 126 to 150 (FDAL…STTH), 151 to 175 (LEKS…GETY), 176 to 199 (GEKE…FPTN), 200 to 223 (KEFH…NIKC), 224 to 250 (VLED…SNLT), 251 to 278 (LNNI…YFSI), 279 to 308 (SNVK…HQVV), 309 to 337 (SDVF…SGTR), 338 to 361 (MVHM…NLLT), 362 to 388 (DTVF…KELS), 389 to 414 (KIAE…SYDE), 415 to 437 (KKGD…ILTD), 438 to 457 (TIFR…SNKI), 458 to 478 (KSIP…VAFN), 479 to 500 (SLTD…IDHN), and 501 to 524 (SVSH…AGDN). Cysteines 110 and 132 form a disulfide. N-linked (GlcNAc...) asparagine glycosylation is found at Asn137 and Asn163. Cys223 and Cys230 are joined by a disulfide. The interaction with bacterial lipopeptide stretch occupies residues 313–316 (GFPQ). The N-linked (GlcNAc...) asparagine glycan is linked to Asn330. Cys343 and Cys368 form a disulfide bridge. An intrachain disulfide couples Cys419 to Cys442. A glycan (N-linked (GlcNAc...) asparagine) is linked at Asn429. The LRRCT domain occupies 525-579 (PFQCTCELGEFVKNIDQVSSEVLEGWPDSYKCDYPESYRGTLLKDFHMSELSCNI). The N-linked (GlcNAc...) asparagine glycan is linked to Asn578. The helical transmembrane segment at 581–601 (LLIVTIVATMLVLAVTVTSLC) threads the bilayer. Topologically, residues 602-786 (SYLDLPWYLR…NIKLTEQAKK (185 aa)) are cytoplasmic. Positions 635 to 776 (LQFHAFISYS…LFWANLRAAI (142 aa)) constitute a TIR domain.

It belongs to the Toll-like receptor family. In terms of assembly, interacts (via extracellular domain) with TLR2. TLR2 seems to exist in heterodimers with either TLR1 or TLR6 before stimulation by the ligand. The heterodimers form bigger oligomers in response to their corresponding ligands as well as further heterotypic associations with other receptors such as CD14 and/or CD36. The activation cluster TLR2:TLR1:CD14 forms in response to triacylated lipopeptides. Binds MYD88 (via TIR domain). Interacts with CNPY3. Interacts with neutrophil recruitment protein from Aedes aegypti saliva; the interaction probably promotes activation of canonical NF-kappa-B signaling in skin-resident macrophages and subsequent expression of neutrophil chemoattractants. As to expression, ubiquitous. Highly expressed in spleen, ovary, peripheral blood leukocytes, thymus and small intestine.

Its subcellular location is the cell membrane. The protein localises to the cytoplasmic vesicle. It localises to the phagosome membrane. It is found in the membrane raft. The protein resides in the golgi apparatus. Its function is as follows. Participates in the innate immune response to microbial agents. Specifically recognizes diacylated and triacylated lipopeptides. Cooperates with TLR2 to mediate the innate immune response to bacterial lipoproteins or lipopeptides. Forms the activation cluster TLR2:TLR1:CD14 in response to triacylated lipopeptides, this cluster triggers signaling from the cell surface and subsequently is targeted to the Golgi in a lipid-raft dependent pathway. Acts via MYD88 and TRAF6, leading to NF-kappa-B activation, cytokine secretion and the inflammatory response. The chain is Toll-like receptor 1 (TLR1) from Homo sapiens (Human).